We begin with the raw amino-acid sequence, 822 residues long: BDNF/NT-3 growth factors receptor (822 aa).

Residues 1–31 form the signal peptide; that stretch reads MSSWIRWHGPAMARLWGFCWLVVGFWRAAFA. 2 disulfide bridges follow: Cys32–Cys38 and Cys36–Cys45. Residues 32-61 enclose the LRRNT domain; sequence CPTSCKCSASRIWCSDPSPGIVAFPRLEPN. Residues 32–430 are Extracellular-facing; sequence CPTSCKCSAS…DVTDKTGREH (399 aa). N-linked (GlcNAc...) asparagine glycans are attached at residues Asn67, Asn95, and Asn121. LRR repeat units follow at residues 92-113 and 116-137; these read GLRNLTIVDSGLKFVAHKAFLK and NLQHINFTRNKLTSLSRKHFRH. The region spanning 148–196 is the LRRCT domain; that stretch reads NPFTCSCDIMWIKTLQEAKSSPDTQDLYCLNESSKNIPLANLQIPNCGL. 2 disulfides stabilise this stretch: Cys152–Cys176 and Cys154–Cys194. N-linked (GlcNAc...) asparagine glycans are attached at residues Asn178, Asn205, Asn241, Asn254, Asn280, Asn325, Asn338, and Asn412. Ig-like C2-type domains are found at residues 197–282 and 295–365; these read PSAN…VNLT and PTSD…IAKN. A disulfide bridge links Cys218 with Cys266. Residues Cys302 and Cys345 are joined by a disulfide bond. The helical transmembrane segment at 431–454 threads the bilayer; sequence LSVYAVVVIASVVGFCLLVMLFLL. An interaction with MAPK8IP3/JIP3 region spans residues 455–466; sequence KLARHSKFGMKG. The Cytoplasmic segment spans residues 455 to 822; it reads KLARHSKFGM…ASPVYLDILG (368 aa). The disordered stretch occupies residues 475–498; that stretch reads DDSASPLHHISNGSNTPSSSEGGP. The span at 485-495 shows a compositional bias: polar residues; that stretch reads SNGSNTPSSSE. At Tyr516 the chain carries Phosphotyrosine; by autocatalysis. Residues 538–807 form the Protein kinase domain; it reads IVLKRELGEG…KNIKGIHTLL (270 aa). ATP contacts are provided by residues 544–552 and Lys572; that span reads LGEGAFGKV. The active-site Proton acceptor is the Asp676. Phosphotyrosine; by autocatalysis is present on residues Tyr702, Tyr706, Tyr707, and Tyr817.

It belongs to the protein kinase superfamily. Tyr protein kinase family. Insulin receptor subfamily. Exists in a dynamic equilibrium between monomeric (low affinity) and dimeric (high affinity) structures. Interacts (phosphorylated upon activation by BDNF) with SHC1; mediates SHC1 phosphorylation and activation. Interacts (phosphorylated upon activation by BDNF) with PLCG1 and/or PLCG2; mediates PLCG1 phosphorylation and activation. Interacts with SH2B1 and SH2B2. Interacts with NGFR; may regulate the ligand specificity of the receptor. Interacts with SORCS2; this interaction is important for normal targeting to post-synaptic densities in response to high-frequency stimulation. Interacts (phosphorylated upon ligand-binding) with SH2D1A; regulates NTRK2. Interacts with SQSTM1 and KIDINS220. Interacts (phosphorylated upon ligand-binding) with FRS2; activates the MAPK signaling pathway. Interacts with APPL1. Interacts with MAPK8IP3/JIP3 and KLC1; interaction with KLC1 is mediated by MAPK8IP3/JIP3. Interacts with SORL1; this interaction facilitates NTRK2 trafficking between synaptic plasma membranes, postsynaptic densities and cell soma, hence positively regulates BDNF signaling. Interacts with SLITRK2. In terms of processing, phosphorylated. Undergoes ligand-mediated autophosphorylation that is required for interaction with SHC1 and PLCG1 and other downstream effectors. Isoform TrkB-T-Shc is not phosphorylated. Ubiquitinated. Undergoes polyubiquitination upon activation; regulated by NGFR. Ubiquitination regulates the internalization of the receptor. In terms of tissue distribution, isoform TrkB is expressed in the central and peripheral nervous system. In the central nervous system (CNS), expression is observed in the cerebral cortex, hippocampus, thalamus, choroid plexus, granular layer of the cerebellum, brain stem, and spinal cord. In the peripheral nervous system, it is expressed in many cranial ganglia, the ophthalmic nerve, the vestibular system, multiple facial structures, the submaxillary glands, and dorsal root ganglia. Isoform TrkB-T1 is mainly expressed in the brain but also detected in other tissues including pancreas, kidney and heart. Isoform TrkB-T-Shc is predominantly expressed in the brain.

It localises to the cell membrane. Its subcellular location is the endosome membrane. The protein resides in the early endosome membrane. The protein localises to the cell projection. It is found in the axon. It localises to the dendrite. Its subcellular location is the cytoplasm. The protein resides in the perinuclear region. The protein localises to the postsynaptic density. The catalysed reaction is L-tyrosyl-[protein] + ATP = O-phospho-L-tyrosyl-[protein] + ADP + H(+). Its activity is regulated as follows. The neuronal activity and the influx of calcium positively regulate the kinase activity and the internalization of the receptor which are both important for active signaling. Regulated by NGFR that may control the internalization of the receptor. NGFR may also stimulate the activation by BDNF compared to NTF3 and NTF4. SH2D1A inhibits the autophosphorylation of the receptor, and alters the recruitment and activation of downstream effectors and signaling cascades. The formation of active receptors dimers able to fully transduce the ligand-mediated signal, may be negatively regulated by the formation of inactive heterodimers with the non-catalytic isoforms. Functionally, receptor tyrosine kinase involved in the development and the maturation of the central and the peripheral nervous systems through regulation of neuron survival, proliferation, migration, differentiation, and synapse formation and plasticity. Receptor for BDNF/brain-derived neurotrophic factor and NTF4/neurotrophin-4. Alternatively can also bind NTF3/neurotrophin-3 which is less efficient in activating the receptor but regulates neuron survival through NTRK2. Upon ligand-binding, undergoes homodimerization, autophosphorylation and activation. Recruits, phosphorylates and/or activates several downstream effectors including SHC1, FRS2, SH2B1, SH2B2 and PLCG1 that regulate distinct overlapping signaling cascades. Through SHC1, FRS2, SH2B1, SH2B2 activates the GRB2-Ras-MAPK cascade that regulates for instance neuronal differentiation including neurite outgrowth. Through the same effectors controls the Ras-PI3 kinase-AKT1 signaling cascade that mainly regulates growth and survival. Through PLCG1 and the downstream protein kinase C-regulated pathways controls synaptic plasticity. Thereby, plays a role in learning and memory by regulating both short term synaptic function and long-term potentiation. PLCG1 also leads to NF-Kappa-B activation and the transcription of genes involved in cell survival. Hence, it is able to suppress anoikis, the apoptosis resulting from loss of cell-matrix interactions. May also play a role in neutrophin-dependent calcium signaling in glial cells and mediate communication between neurons and glia. This chain is BDNF/NT-3 growth factors receptor (NTRK2), found in Homo sapiens (Human).